The following is a 194-amino-acid chain: Orotate phosphoribosyltransferase (194 aa).

Residues lysine 98 and 122-130 each bind 5-phospho-alpha-D-ribose 1-diphosphate; that span reads EDVLTTGGS. Threonine 126 and arginine 154 together coordinate orotate.

The protein belongs to the purine/pyrimidine phosphoribosyltransferase family. PyrE subfamily. Homodimer. Requires Mg(2+) as cofactor.

It catalyses the reaction orotidine 5'-phosphate + diphosphate = orotate + 5-phospho-alpha-D-ribose 1-diphosphate. It functions in the pathway pyrimidine metabolism; UMP biosynthesis via de novo pathway; UMP from orotate: step 1/2. Catalyzes the transfer of a ribosyl phosphate group from 5-phosphoribose 1-diphosphate to orotate, leading to the formation of orotidine monophosphate (OMP). The sequence is that of Orotate phosphoribosyltransferase from Deinococcus radiodurans (strain ATCC 13939 / DSM 20539 / JCM 16871 / CCUG 27074 / LMG 4051 / NBRC 15346 / NCIMB 9279 / VKM B-1422 / R1).